A 325-amino-acid polypeptide reads, in one-letter code: NADH-quinone oxidoreductase subunit H (325 aa).

8 helical membrane-spanning segments follow: residues 11–31 (ILLTILKAVVILLVVVTCGAF), 81–101 (VIFTLAPMIAFTSLLLAFAIV), 114–134 (IGILFFLMMAGLAVYAVLFAG), 154–174 (LSYEVFLGLSLMGVVAQAGSF), 186–206 (VWNVIPQFFGFITFAIAGVAV), 237–257 (FFVGEYIGIVTISALMVTLFF), 265–285 (LPPFIWFALKTAFFMMMFILI), and 304–324 (ICLPLTLINLLVTAAVILWQA).

The protein belongs to the complex I subunit 1 family. As to quaternary structure, NDH-1 is composed of 13 different subunits. Subunits NuoA, H, J, K, L, M, N constitute the membrane sector of the complex.

It localises to the cell inner membrane. It carries out the reaction a quinone + NADH + 5 H(+)(in) = a quinol + NAD(+) + 4 H(+)(out). NDH-1 shuttles electrons from NADH, via FMN and iron-sulfur (Fe-S) centers, to quinones in the respiratory chain. The immediate electron acceptor for the enzyme in this species is believed to be ubiquinone. Couples the redox reaction to proton translocation (for every two electrons transferred, four hydrogen ions are translocated across the cytoplasmic membrane), and thus conserves the redox energy in a proton gradient. This subunit may bind ubiquinone. The polypeptide is NADH-quinone oxidoreductase subunit H (Escherichia coli O7:K1 (strain IAI39 / ExPEC)).